Here is an 81-residue protein sequence, read N- to C-terminus: Protein GPR15LG (81 aa).

The first 24 residues, methionine 1–glycine 24, serve as a signal peptide directing secretion. Disulfide bonds link cysteine 40/cysteine 63 and cysteine 41/cysteine 60.

As to quaternary structure, interacts with SUSD2; the interaction is direct.

The protein resides in the secreted. In terms of biological role, highly cationic protein that has multiple functions. Acts as a chemotactic factor that mediates lymphocytes recruitment to epithelia through binding and activation of the G-protein coupled receptor GPR15. May be a tumor suppressor; together with SUSD2 has a growth inhibitory effect on colon cancer cells which includes G1 cell cycle arrest. May regulate keratinocyte proliferation. In addition, through activation of Mas-related G protein-coupled receptors (MRGPRs) contributes to pruritogenesis by activating itch-selective sensory neurons and mast cells degranulation. Functionally, has antimicrobial activity against Gram-positive bacteria, including Staphylococcus aureus and Actinomyces spec., and Mycoplasma hominis and lentivirus. This chain is Protein GPR15LG (GPR15LG), found in Sus scrofa (Pig).